A 166-amino-acid chain; its full sequence is Large ribosomal subunit protein eL21 (166 aa).

The protein belongs to the eukaryotic ribosomal protein eL21 family. Component of the large ribosomal subunit.

The protein localises to the cytoplasm. The protein resides in the cytosol. Its subcellular location is the endoplasmic reticulum. In terms of biological role, component of the large ribosomal subunit. The ribosome is a large ribonucleoprotein complex responsible for the synthesis of proteins in the cell. The chain is Large ribosomal subunit protein eL21 (RPL21) from Entamoeba histolytica (strain ATCC 30459 / HM-1:IMSS / ABRM).